A 186-amino-acid polypeptide reads, in one-letter code: UPF0397 protein LCABL_04350 (186 aa).

5 helical membrane passes run 12 to 32, 45 to 65, 77 to 97, 112 to 132, and 150 to 170; these read VVAI…AVIP, GFLG…IGFL, TPWW…GLFW, IVSF…LIAP, and GIVS…ILLV.

Belongs to the UPF0397 family.

The protein localises to the cell membrane. The sequence is that of UPF0397 protein LCABL_04350 from Lacticaseibacillus casei (strain BL23) (Lactobacillus casei).